A 253-amino-acid chain; its full sequence is Uracil-DNA glycosylase (253 aa).

D79 (proton acceptor) is an active-site residue.

The protein belongs to the uracil-DNA glycosylase (UDG) superfamily. UNG family.

Its subcellular location is the cytoplasm. It carries out the reaction Hydrolyzes single-stranded DNA or mismatched double-stranded DNA and polynucleotides, releasing free uracil.. Its function is as follows. Excises uracil residues from the DNA which can arise as a result of misincorporation of dUMP residues by DNA polymerase or due to deamination of cytosine. The sequence is that of Uracil-DNA glycosylase from Xylella fastidiosa (strain M23).